Here is a 439-residue protein sequence, read N- to C-terminus: Ribosomal protein uS12 methylthiotransferase RimO (439 aa).

The region spanning 7–119 (KQLCLISLGC…IDIMIAKKQN (113 aa)) is the MTTase N-terminal domain. 6 residues coordinate [4Fe-4S] cluster: cysteine 16, cysteine 50, cysteine 82, cysteine 151, cysteine 155, and cysteine 158. In terms of domain architecture, Radical SAM core spans 137–368 (TGSSVHAYVK…ALKHQNHSFK (232 aa)).

Belongs to the methylthiotransferase family. RimO subfamily. [4Fe-4S] cluster is required as a cofactor.

The protein resides in the cytoplasm. It catalyses the reaction L-aspartate(89)-[ribosomal protein uS12]-hydrogen + (sulfur carrier)-SH + AH2 + 2 S-adenosyl-L-methionine = 3-methylsulfanyl-L-aspartate(89)-[ribosomal protein uS12]-hydrogen + (sulfur carrier)-H + 5'-deoxyadenosine + L-methionine + A + S-adenosyl-L-homocysteine + 2 H(+). Catalyzes the methylthiolation of an aspartic acid residue of ribosomal protein uS12. The sequence is that of Ribosomal protein uS12 methylthiotransferase RimO from Helicobacter pylori (strain G27).